The primary structure comprises 218 residues: Glutathione S-transferase PM239X14 (218 aa).

The GST N-terminal domain occupies 2-85; sequence VTVKLYGMAY…YLVAKYGKGS (84 aa). Glutathione contacts are provided by residues 12 to 13, 41 to 42, 55 to 56, and 69 to 70; these read ST, HK, VI, and ES. Residues 93-218 form the GST C-terminal domain; that stretch reads DPKAYGLFEQ…LLRNSSKEFM (126 aa).

Belongs to the GST superfamily. Phi family. Expressed in vegetative rosettes.

The protein resides in the cytoplasm. Its subcellular location is the cytosol. The enzyme catalyses RX + glutathione = an S-substituted glutathione + a halide anion + H(+). Specifically catalyzes the conjugation of synthetic 1-chloro-2,4-ditrobenzene to GSH. Also functions as a glutathione peroxidase, converting linoleate oxidation products into their corresponding hydroxyacids. This enzyme may thus serve to protect the cell from oxygen toxicity as well as from exogenous toxins such as herbicides. This Arabidopsis thaliana (Mouse-ear cress) protein is Glutathione S-transferase PM239X14.